Reading from the N-terminus, the 443-residue chain is Ribosomal protein uS12 methylthiotransferase RimO (443 aa).

The 111-residue stretch at 11-121 (PTVGFVSLGC…VMEAVHGALP (111 aa)) folds into the MTTase N-terminal domain. 6 residues coordinate [4Fe-4S] cluster: C20, C56, C85, C152, C156, and C159. The Radical SAM core domain maps to 138–375 (LTPRHYAYLK…METQAEISAA (238 aa)). Residues 378 to 443 (DAKIGRTIEV…DAHDLWATPV (66 aa)) form the TRAM domain.

Belongs to the methylthiotransferase family. RimO subfamily. [4Fe-4S] cluster serves as cofactor.

The protein resides in the cytoplasm. It carries out the reaction L-aspartate(89)-[ribosomal protein uS12]-hydrogen + (sulfur carrier)-SH + AH2 + 2 S-adenosyl-L-methionine = 3-methylsulfanyl-L-aspartate(89)-[ribosomal protein uS12]-hydrogen + (sulfur carrier)-H + 5'-deoxyadenosine + L-methionine + A + S-adenosyl-L-homocysteine + 2 H(+). In terms of biological role, catalyzes the methylthiolation of an aspartic acid residue of ribosomal protein uS12. The protein is Ribosomal protein uS12 methylthiotransferase RimO of Thiobacillus denitrificans (strain ATCC 25259 / T1).